A 147-amino-acid polypeptide reads, in one-letter code: Large ribosomal subunit protein bL9 (147 aa).

The protein belongs to the bacterial ribosomal protein bL9 family.

Binds to the 23S rRNA. In Flavobacterium psychrophilum (strain ATCC 49511 / DSM 21280 / CIP 103535 / JIP02/86), this protein is Large ribosomal subunit protein bL9.